A 68-amino-acid chain; its full sequence is MARVTIEDCLKNVPSRFALVHMAALRVRQLREGADLLIKPSKNEDAVIALREIAANRIVLKNKSDKKG.

It belongs to the RNA polymerase subunit omega family. The RNAP catalytic core consists of 2 alpha, 1 beta, 1 beta' and 1 omega subunit. When a sigma factor is associated with the core the holoenzyme is formed, which can initiate transcription.

It catalyses the reaction RNA(n) + a ribonucleoside 5'-triphosphate = RNA(n+1) + diphosphate. Promotes RNA polymerase assembly. Latches the N- and C-terminal regions of the beta' subunit thereby facilitating its interaction with the beta and alpha subunits. This is DNA-directed RNA polymerase subunit omega from Desulforapulum autotrophicum (strain ATCC 43914 / DSM 3382 / VKM B-1955 / HRM2) (Desulfobacterium autotrophicum).